A 117-amino-acid polypeptide reads, in one-letter code: UPF0102 protein FTF0898c (117 aa).

This sequence belongs to the UPF0102 family.

This is UPF0102 protein FTF0898c from Francisella tularensis subsp. tularensis (strain FSC 198).